Reading from the N-terminus, the 552-residue chain is Formate--tetrahydrofolate ligase (552 aa).

An ATP-binding site is contributed by 63-70; the sequence is TPFGEGKT.

The protein belongs to the formate--tetrahydrofolate ligase family.

It catalyses the reaction (6S)-5,6,7,8-tetrahydrofolate + formate + ATP = (6R)-10-formyltetrahydrofolate + ADP + phosphate. It functions in the pathway one-carbon metabolism; tetrahydrofolate interconversion. The polypeptide is Formate--tetrahydrofolate ligase (Caldicellulosiruptor bescii (strain ATCC BAA-1888 / DSM 6725 / KCTC 15123 / Z-1320) (Anaerocellum thermophilum)).